The following is a 212-amino-acid chain: Probable GTP-binding protein EngB (212 aa).

In terms of domain architecture, EngB-type G spans 25 to 199; sequence FGYEVAFAGR…WAKLDEWMEY (175 aa). GTP is bound by residues 33-40, 60-64, 78-81, 145-148, and 178-180; these read GRSNAGKS, GRTQL, DLPG, TKSD, and FSS. Mg(2+) is bound by residues S40 and T62.

This sequence belongs to the TRAFAC class TrmE-Era-EngA-EngB-Septin-like GTPase superfamily. EngB GTPase family. The cofactor is Mg(2+).

Functionally, necessary for normal cell division and for the maintenance of normal septation. This is Probable GTP-binding protein EngB from Hydrogenovibrio crunogenus (strain DSM 25203 / XCL-2) (Thiomicrospira crunogena).